Consider the following 244-residue polypeptide: Small ribosomal subunit protein eS4 (244 aa).

One can recognise an S4 RNA-binding domain in the interval 43–106 (LPLLLVVRDV…DETYLVLFDE (64 aa)).

This sequence belongs to the eukaryotic ribosomal protein eS4 family.

This chain is Small ribosomal subunit protein eS4, found in Methanococcus maripaludis (strain DSM 14266 / JCM 13030 / NBRC 101832 / S2 / LL).